A 562-amino-acid chain; its full sequence is Protein TBF1 (562 aa).

Residues 376–414 (ASMSNSSSGPHSSHNNSSNSNNNGSIGLRKPKAKRTWSK) form a disordered region. Low complexity predominate over residues 377-400 (SMSNSSSGPHSSHNNSSNSNNNGS). An HTH myb-type domain is found at 404–460 (RKPKAKRTWSKEEEEALVEGLKEVGPSWSKILDLYGPGGKITENLKNRTQVQLKDKA). The segment at residues 431 to 456 (WSKILDLYGPGGKITENLKNRTQVQL) is a DNA-binding region (H-T-H motif). Residues 495–562 (FSQSPNSSTI…GFDPHLEDGM (68 aa)) form a disordered region. 2 stretches are compositionally biased toward polar residues: residues 496–522 (SQSP…ATED) and 532–552 (GQNS…SDNT).

In terms of assembly, homodimer.

It is found in the nucleus. The protein localises to the chromosome. It localises to the telomere. In terms of biological role, binds the telomeric double-stranded TTAGGG repeat and negatively regulates telomere length. Involved in the regulation of gene expression. 52 binding sites have been identified, distributed over 15 chromosomes. A member of the general regulatory factors (GRFs) which act as genome partitioners. Acts as a chromatin insulator which are known as STARs (Subtelomeric anti-silencing region). STARs prevent negative or positive transcription influence by extending across chromatin to a promoter. In Saccharomyces cerevisiae (strain ATCC 204508 / S288c) (Baker's yeast), this protein is Protein TBF1 (TBF1).